A 912-amino-acid polypeptide reads, in one-letter code: MLGGLAKAIFGSSNDRYVKSLRPILQKIAGFEPTLEAMNDEELAAQTVKFRQRLDAGETLDSLLPEAFATVREAARRVLGQRHYDVQMIGGIVLHRGEIAEMRTGEGKTLVATLAVYLNALPGEGVHVVTVNDYLATRDAEWMGRVYRFLGLTVGVIVPNLSDQERRDAYGADITYGTNNEFGFDYLRDNMKYDRALMVHRPFNFAVVDEVDSVLIDEARTPLIISGPTDDKSELYMQVDAIVKQVTKDDYEFDEKQRSVVLTEDGTERIERLLEAAGLLEGGNLYAYENTQVVHHLNQALRANVAFKRDTDYIVKDEKIIIIDEFTGRMMDGRRWSDGLHQAVEAKEGVKIEPENQTLASITFQNYFRMYPKLGGMTGTAATEAHEFYQIYKMNVVTIPTNLPVKRIDQDDEFYKNMLDKFAAITQAIREAKERGQPVLVGTVSIEKSELLSEFLTKEKVEHKVLNARYHEQEAHIVAQAGRLGAVTIATNMAGRGTDIQLGGNLEFRMLDEHPALEIGTPEFDAAAERIRGEIIAEKEAVLAAGGLFVLGTERHESRRIDNQLRGRSGRQGDPGLSRFYLSLDDDLLRIFGPQTMFARMMNKNLADGEAIVSPWISKAIETAQKKVEARNYDIRKQVVEYDDVMNDQRKVIYEQRADIMDAETVDDVVTDMRADTANAIVGGCCPPHSYPEQWDVDTLKLRSAETLGITPPFDEWIEQDGIDPEILAEKVLAEADAVIAAKRATIDDQSWHGIEKSVLLQTLDHHWKEHLATLDALRQVIHLRAYAQKTPINEYKHEAFALFERMLVAIREEVTRVLAHVRFEMAPQDYAELPPMPDFVTEHVNALTGEDNSGDRDGGTLGIIGSRVPQAIAAPAGDDFEITPEIAATLGRNSLCPCGSGRKYKHCHGAL.

Residues Q87, 105–109, and D499 each bind ATP; that span reads GEGKT. Residues C897, C899, C908, and H909 each coordinate Zn(2+).

Belongs to the SecA family. As to quaternary structure, monomer and homodimer. Part of the essential Sec protein translocation apparatus which comprises SecA, SecYEG and auxiliary proteins SecDF-YajC and YidC. The cofactor is Zn(2+).

The protein localises to the cell inner membrane. Its subcellular location is the cytoplasm. It catalyses the reaction ATP + H2O + cellular proteinSide 1 = ADP + phosphate + cellular proteinSide 2.. Functionally, part of the Sec protein translocase complex. Interacts with the SecYEG preprotein conducting channel. Has a central role in coupling the hydrolysis of ATP to the transfer of proteins into and across the cell membrane, serving both as a receptor for the preprotein-SecB complex and as an ATP-driven molecular motor driving the stepwise translocation of polypeptide chains across the membrane. In Rhizorhabdus wittichii (strain DSM 6014 / CCUG 31198 / JCM 15750 / NBRC 105917 / EY 4224 / RW1) (Sphingomonas wittichii), this protein is Protein translocase subunit SecA.